Here is a 596-residue protein sequence, read N- to C-terminus: SUN domain-containing protein 4 (596 aa).

A helical transmembrane segment spans residues 28 to 48; the sequence is VSLSLVFLIWGLVFLSTLWIS. 2 disordered regions span residues 58-98 and 139-158; these read LVDS…LSSD and KQSE…TTGS. The segment covering 66–77 has biased composition (acidic residues); it reads EPDDERADETAE. Composition is skewed to polar residues over residues 80-95 and 141-158; these read DATS…NPGL and SEIN…TTGS. In terms of domain architecture, SUN spans 179–343; the sequence is SNSRDKSLSG…SLLEVYGVDA (165 aa). Positions 366-396 are enriched in basic and acidic residues; that stretch reads DTEQKEKKTMQAKESFESDEDKSKQKEKEQE. The interval 366–410 is disordered; the sequence is DTEQKEKKTMQAKESFESDEDKSKQKEKEQEASPENAVVKDEVSL. Residues 475–544 adopt a coiled-coil conformation; sequence ASKREKEVET…LERLEWMEKK (70 aa). Transmembrane regions (helical) follow at residues 545–565 and 576–596; these read GVVV…AVVF and GGLA…ILSL.

Forms homomers and heteromers with SUN3. Interacts with SUN1, SUN2 and TIK.

Its subcellular location is the nucleus membrane. It is found in the endoplasmic reticulum membrane. Encodes a member of the mid-SUN subfamily of SUN-domain proteins that is localized to both the nuclear envelope and the ER. It is involved in early seed development and nuclear morphology. [TAIR]. This is SUN domain-containing protein 4 from Arabidopsis thaliana (Mouse-ear cress).